A 371-amino-acid polypeptide reads, in one-letter code: Palmitoyl-monogalactosyldiacylglycerol delta-7 desaturase, chloroplastic (371 aa).

The transit peptide at 1-67 (MASLLTKPKP…KGLKRDVTTA (67 aa)) directs the protein to the chloroplast. The next 2 membrane-spanning stretches (helical) occupy residues 103–123 (FGAV…PFQF) and 127–147 (AVSV…TLSF). The short motif at 148–153 (HRNLSH) is the Histidine box-1 element. The Histidine box-2 motif lies at 185 to 189 (HRYHH). The helical transmembrane segment at 251–271 (ALAVALYAMGGFPFIVWGMGV) threads the bilayer. The Histidine box-3 signature appears at 317–321 (HNNHH).

This sequence belongs to the fatty acid desaturase type 1 family. Fe(2+) serves as cofactor. In terms of tissue distribution, highly expressed in young leaves. Low expression in roots.

Its subcellular location is the plastid. The protein resides in the chloroplast membrane. It carries out the reaction a 1-acyl-2-hexadecanoyl-glycerolipid + 2 reduced [2Fe-2S]-[ferredoxin] + O2 + 2 H(+) = a 1-acyl-2-[(7Z)-hexadecenoyl]-glycerolipid + 2 oxidized [2Fe-2S]-[ferredoxin] + 2 H2O. The protein operates within lipid metabolism; oxylipin biosynthesis. It functions in the pathway lipid metabolism; polyunsaturated fatty acid biosynthesis. Its function is as follows. Fatty acid desaturase involved in the first desaturation step leading to the formation of hexadeca 7,10,13-trienoic acid (16:3(7Z,10Z,13Z)), the major functional components of thylakoid membranes. Required for chloroplast biogenesis at low temperature. Also indirectly involved in the production of the oxylipin dinor-oxo-phyto-dienoic acid implicated in wound signaling. The protein is Palmitoyl-monogalactosyldiacylglycerol delta-7 desaturase, chloroplastic of Arabidopsis thaliana (Mouse-ear cress).